The primary structure comprises 173 residues: Flavodoxin 2 (173 aa).

Residues 3 to 165 enclose the Flavodoxin-like domain; sequence MGLFYGSSTC…RIQTWCEQIL (163 aa).

The protein belongs to the flavodoxin family. FMN serves as cofactor.

Functionally, low-potential electron donor to a number of redox enzymes. In Salmonella typhi, this protein is Flavodoxin 2 (fldB).